A 284-amino-acid chain; its full sequence is MLIIESVLLLRQHIRRLRQEGKRIALVPTMGNLHDGHMKLVDEAKASADVVVVSIFVNPMQFDRADDLARYPRTLQDDCEKLNKRHVDFVFAPTPAEVYPQGTEGQTYVDVPGLSTMLEGASRPGHFRGVSTIVSKLFNLVQPDVACFGEKDFQQLALIRKMVADMGYDIEIIGVPIVRAKDGLALSSRNGYLTADQRKIAPGLYKVLSAVAEKLAAGDRQLDEIIAIAEQELNEKGFRADDIQIRDADTLLELTDASQRAVILMAAWLGQARLIDNQIVTLGQ.

Residue 30-37 (MGNLHDGH) participates in ATP binding. H37 (proton donor) is an active-site residue. Position 61 (Q61) interacts with (R)-pantoate. Q61 serves as a coordination point for beta-alanine. Residue 149–152 (GEKD) coordinates ATP. Q155 is a (R)-pantoate binding site. ATP contacts are provided by residues V178 and 186–189 (LSSR).

This sequence belongs to the pantothenate synthetase family. Homodimer.

The protein resides in the cytoplasm. The enzyme catalyses (R)-pantoate + beta-alanine + ATP = (R)-pantothenate + AMP + diphosphate + H(+). It functions in the pathway cofactor biosynthesis; (R)-pantothenate biosynthesis; (R)-pantothenate from (R)-pantoate and beta-alanine: step 1/1. Catalyzes the condensation of pantoate with beta-alanine in an ATP-dependent reaction via a pantoyl-adenylate intermediate. In Klebsiella pneumoniae (strain 342), this protein is Pantothenate synthetase.